The following is a 380-amino-acid chain: Glycerate kinase (380 aa).

The protein belongs to the glycerate kinase type-1 family.

It catalyses the reaction (R)-glycerate + ATP = (2R)-3-phosphoglycerate + ADP + H(+). In Halalkalibacterium halodurans (strain ATCC BAA-125 / DSM 18197 / FERM 7344 / JCM 9153 / C-125) (Bacillus halodurans), this protein is Glycerate kinase (glxK).